Here is a 317-residue protein sequence, read N- to C-terminus: Transaldolase (317 aa).

Residue lysine 126 is the Schiff-base intermediate with substrate of the active site.

This sequence belongs to the transaldolase family. Type 1 subfamily. In terms of assembly, homodimer.

The protein localises to the cytoplasm. It carries out the reaction D-sedoheptulose 7-phosphate + D-glyceraldehyde 3-phosphate = D-erythrose 4-phosphate + beta-D-fructose 6-phosphate. The protein operates within carbohydrate degradation; pentose phosphate pathway; D-glyceraldehyde 3-phosphate and beta-D-fructose 6-phosphate from D-ribose 5-phosphate and D-xylulose 5-phosphate (non-oxidative stage): step 2/3. In terms of biological role, transaldolase is important for the balance of metabolites in the pentose-phosphate pathway. This Burkholderia orbicola (strain MC0-3) protein is Transaldolase.